The sequence spans 377 residues: tRNA-queuosine alpha-mannosyltransferase (377 aa).

This sequence belongs to the glycosyltransferase group 1 family. Glycosyltransferase 4 subfamily.

The catalysed reaction is queuosine(34) in tRNA(Asp) + GDP-alpha-D-mannose = O-4''-alpha-D-mannosylqueuosine(34) in tRNA(Asp) + GDP + H(+). Its function is as follows. Glycosyltransferase that specifically catalyzes mannosylation of cytoplasmic tRNA(Asp) modified with queuosine at position 34 (queuosine(34)). Mannosylates the cyclopentene moiety of queuosine(34) in tRNA(Asp) to form mannosyl-queuosine(34). The polypeptide is tRNA-queuosine alpha-mannosyltransferase (Drosophila melanogaster (Fruit fly)).